Here is a 722-residue protein sequence, read N- to C-terminus: Endoglucanase F (722 aa).

Positions 1 to 29 (MSKNFKRVGAVAVAAAMSLSIMATTSINA) are cleaved as a signal peptide. Residues 142 to 165 (PEFQDPSKYPSPLDTSQPVGRDPI) form a disordered region. Residues 154 to 165 (LDTSQPVGRDPI) are compositionally biased toward polar residues. The region spanning 661–722 (PEKLLGDVNG…LLKKALLSIQ (62 aa)) is the Dockerin domain.

It belongs to the glycosyl hydrolase 48 (cellulase L) family.

The catalysed reaction is Endohydrolysis of (1-&gt;4)-beta-D-glucosidic linkages in cellulose, lichenin and cereal beta-D-glucans.. Probable endoglucanase involved in the degradation of cellulose or related beta-glucans. This chain is Endoglucanase F (celCCF), found in Ruminiclostridium cellulolyticum (strain ATCC 35319 / DSM 5812 / JCM 6584 / H10) (Clostridium cellulolyticum).